Consider the following 146-residue polypeptide: Cyanate hydratase (146 aa).

Residues Arg87, Glu90, and Ser113 contribute to the active site.

This sequence belongs to the cyanase family.

It carries out the reaction cyanate + hydrogencarbonate + 3 H(+) = NH4(+) + 2 CO2. In terms of biological role, catalyzes the reaction of cyanate with bicarbonate to produce ammonia and carbon dioxide. This Teredinibacter turnerae (strain ATCC 39867 / T7901) protein is Cyanate hydratase.